The sequence spans 508 residues: Immunoglobulin G-binding protein A (508 aa).

Residues 1–36 (MKKKNIYSIRKLGVGIASVTLGTLLISGGVTPAANA) form the signal peptide. The YSIRK-G/S signaling motif signature appears at 7–18 (YSIRKLGVGIAS). An Immunoglobulin-binding region E repeat occupies 37 to 92 (AQHDEAQQNAFYQVLNMPNLNADQRNGFIQSLKDDPSQSANVLGEAQKLNDSQAPK). The Immunoglobulin-binding region D repeat unit spans residues 93–153 (ADAQQNKFNK…KKLNESQAPK (61 aa)). One copy of the Immunoglobulin-binding region A repeat lies at 154-211 (ADNNFNKEQQNAFYEILNMPNLNEEQRNGFIQSLKDDPSQSANLLAEAKKLNESQAPK). Residues 212 to 269 (ADNKFNKEQQNAFYEILHLPNLNEEQRNGFIQSLKDDPSQSANLLAEAKKLNDAQAPK) form an Immunoglobulin-binding region B repeat. The stretch at 270–327 (ADNKFNKEQQNAFYEILHLPNLTEEQRNGFIQSLKDDPSVSKEILAEAKKLNDAQAPK) is one Immunoglobulin-binding region C repeat. Basic and acidic residues predominate over residues 318-412 (KKLNDAQAPK…GNKPGKEDGN (95 aa)). 2 disordered regions span residues 318-424 (KKLN…DTVN) and 459-479 (KKQP…ETGE). Repeat copies occupy residues 333 to 340 (KPGKEDGN), 341 to 348 (KPGKEDGN), 349 to 356 (KPGKEDNK), 357 to 364 (KPGKEDGN), 365 to 372 (KPGKEDNK), 373 to 380 (KPGKEDGN), 381 to 388 (KPGKEDGN), 389 to 396 (KPGKEDGN), 397 to 405 (KPGKEDGNK), 406 to 413 (PGKEDGNG), 414 to 421 (VHVVKPGD), and 422 to 429 (TVNDIAKA). The 12 X 8 AA approximate tandem repeats stretch occupies residues 333–408 (KPGKEDGNKP…GKEDGNKPGK (76 aa)). The 45-residue stretch at 413–457 (GVHVVKPGDTVNDIAKANGTTADKIAADNKLADKNMIKPGQELVV) folds into the LysM domain. An LPXTG sorting signal motif is present at residues 474–478 (LPETG). Thr-477 is modified (pentaglycyl murein peptidoglycan amidated threonine). Residues 478–508 (GEENPFIGTTVFGGLSLALGAALLAGRRREL) constitute a propeptide, removed by sortase.

The protein belongs to the immunoglobulin-binding protein SpA family. In terms of assembly, interacts with host TNFRSF1A; this interaction leads to the stimulation of both surface expression and shedding of TNFRSF1A.

It localises to the secreted. It is found in the cell wall. Plays a role in the inhibition of the host innate and adaptive immune responses. Possesses five immunoglobulin-binding domains that capture both the fragment crystallizable region (Fc region) and the Fab region (part of Ig that identifies antigen) of immunoglobulins. In turn, Staphylococcus aureus is protected from phagocytic killing via inhibition of Ig Fc region. In addition, the host elicited B-cell response is prevented due to a decrease of antibody-secreting cell proliferation that enter the bone marrow, thereby decreasing long-term antibody production. Inhibits osteogenesis by preventing osteoblast proliferation and expression of alkaline phosphatase, type I collagen, osteopontin and osteocalcin. Acts directly as a pro-inflammatory factor in the lung through its ability to bind and activate tumor necrosis factor alpha receptor 1/TNFRSF1A. The sequence is that of Immunoglobulin G-binding protein A (spa) from Staphylococcus aureus.